A 316-amino-acid polypeptide reads, in one-letter code: Protein lifeguard 2 (316 aa).

The disordered stretch occupies residues 1 to 49 (MTQGKLSVANKAPGTEGQQQANGEKKDAPAVPSAPPSYEEATSGEGLKA). The next 3 membrane-spanning stretches (helical) occupy residues 106-126 (VYTI…LFTF), 138-158 (PGWY…LACC), and 165-185 (FPWN…LTGM). Asn-191 carries N-linked (GlcNAc...) asparagine glycosylation. Helical transmembrane passes span 194–214 (SVLL…IFSF), 225–245 (GVLF…AILL), 251–271 (PWLH…FLAF), and 290–310 (IFGA…FLQL).

Belongs to the BI1 family. LFG subfamily. Interacts with FAS/TNFRSF6 and BAX. Expressed at high levels on dendrites and to a lesser extent on the soma and axons of neurons in various regions of brain.

Its subcellular location is the cell membrane. It localises to the membrane raft. The protein localises to the postsynaptic cell membrane. Antiapoptotic protein which protects cells uniquely from Fas-induced apoptosis. Regulates Fas-mediated apoptosis in neurons by interfering with caspase-8 activation. Plays a role in cerebellar development by affecting cerebellar size, internal granular layer (IGL) thickness, and Purkinje cell (PC) development. This is Protein lifeguard 2 (Faim2) from Rattus norvegicus (Rat).